The primary structure comprises 24 residues: Brevinin-1PTb (24 aa).

Cys18 and Cys24 are joined by a disulfide.

Expressed by the skin glands.

It localises to the secreted. Has antibacterial activity against the Gram-positive bacterium S.aureus ATCC 25923 and the Gram-negative bacterium E.coli ATCC 25726. This is Brevinin-1PTb from Pulchrana picturata (Malaysian fire frog).